The following is a 91-amino-acid chain: PqqA binding protein (91 aa).

It belongs to the PqqD family. Monomer. Interacts with PqqE.

It functions in the pathway cofactor biosynthesis; pyrroloquinoline quinone biosynthesis. Its function is as follows. Functions as a PqqA binding protein and presents PqqA to PqqE, in the pyrroloquinoline quinone (PQQ) biosynthetic pathway. The sequence is that of PqqA binding protein from Pseudomonas entomophila (strain L48).